Reading from the N-terminus, the 437-residue chain is O-methyltransferase 3 (437 aa).

The segment at 1–21 (MNNKTSNGDITNDEPTVGSKR) is disordered. A coiled-coil region spans residues 146–180 (SDNLYQDKDDLEKQEKEREKKMANLLSKNVDIKEL). The tract at residues 408–437 (DPINNNNNNNNNNNNNNNNTTTTTSTTTTN) is disordered. Positions 411-437 (NNNNNNNNNNNNNNNNTTTTTSTTTTN) are enriched in low complexity.

It belongs to the methyltransferase superfamily. METL family.

Its function is as follows. Probable methyltransferase. This is O-methyltransferase 3 (omt3) from Dictyostelium discoideum (Social amoeba).